The sequence spans 109 residues: Class I hydrophobin dewE (109 aa).

Positions 1–20 (MKVATALSVLAVAGSALASA) are cleaved as a signal peptide. 4 disulfide bridges follow: Cys-34–Cys-87, Cys-40–Cys-81, Cys-41–Cys-74, and Cys-88–Cys-102.

The protein belongs to the fungal hydrophobin family. As to quaternary structure, self-assembles to form functional amyloid fibrils called rodlets. Self-assembly into fibrillar rodlets occurs spontaneously at hydrophobic:hydrophilic interfaces and the rodlets further associate laterally to form amphipathic monolayers.

The protein localises to the secreted. The protein resides in the spore wall. Aerial growth, conidiation, and dispersal of filamentous fungi in the environment rely upon a capability of their secreting small amphipathic proteins called hydrophobins (HPBs) with low sequence identity. Class I can self-assemble into an outermost layer of rodlet bundles on aerial cell surfaces, conferring cellular hydrophobicity that supports fungal growth, development and dispersal; whereas Class II form highly ordered films at water-air interfaces through intermolecular interactions but contribute nothing to the rodlet structure. DewE is a class I hydrophobin that contributes to the hydrophobicity of the spore surface. The protein is Class I hydrophobin dewE of Emericella nidulans (strain FGSC A4 / ATCC 38163 / CBS 112.46 / NRRL 194 / M139) (Aspergillus nidulans).